The chain runs to 189 residues: Elongation factor P (189 aa).

This sequence belongs to the elongation factor P family.

The protein localises to the cytoplasm. Its pathway is protein biosynthesis; polypeptide chain elongation. Functionally, involved in peptide bond synthesis. Stimulates efficient translation and peptide-bond synthesis on native or reconstituted 70S ribosomes in vitro. Probably functions indirectly by altering the affinity of the ribosome for aminoacyl-tRNA, thus increasing their reactivity as acceptors for peptidyl transferase. This chain is Elongation factor P, found in Rhizobium johnstonii (strain DSM 114642 / LMG 32736 / 3841) (Rhizobium leguminosarum bv. viciae).